A 175-amino-acid polypeptide reads, in one-letter code: ATP synthase subunit b (175 aa).

Residues 19–39 (LVVGTIAFALLVFVLLKFVMP) form a helical membrane-spanning segment.

This sequence belongs to the ATPase B chain family. F-type ATPases have 2 components, F(1) - the catalytic core - and F(0) - the membrane proton channel. F(1) has five subunits: alpha(3), beta(3), gamma(1), delta(1), epsilon(1). F(0) has three main subunits: a(1), b(2) and c(10-14). The alpha and beta chains form an alternating ring which encloses part of the gamma chain. F(1) is attached to F(0) by a central stalk formed by the gamma and epsilon chains, while a peripheral stalk is formed by the delta and b chains.

Its subcellular location is the cell membrane. In terms of biological role, f(1)F(0) ATP synthase produces ATP from ADP in the presence of a proton or sodium gradient. F-type ATPases consist of two structural domains, F(1) containing the extramembraneous catalytic core and F(0) containing the membrane proton channel, linked together by a central stalk and a peripheral stalk. During catalysis, ATP synthesis in the catalytic domain of F(1) is coupled via a rotary mechanism of the central stalk subunits to proton translocation. Functionally, component of the F(0) channel, it forms part of the peripheral stalk, linking F(1) to F(0). The polypeptide is ATP synthase subunit b (Salinispora tropica (strain ATCC BAA-916 / DSM 44818 / JCM 13857 / NBRC 105044 / CNB-440)).